Reading from the N-terminus, the 361-residue chain is Phosphoserine aminotransferase (361 aa).

Residue arginine 43 coordinates L-glutamate. Residues 77 to 78 (AS), tryptophan 103, threonine 152, aspartate 172, and glutamine 195 each bind pyridoxal 5'-phosphate. Lysine 196 carries the post-translational modification N6-(pyridoxal phosphate)lysine. 237-238 (NT) contacts pyridoxal 5'-phosphate.

It belongs to the class-V pyridoxal-phosphate-dependent aminotransferase family. SerC subfamily. In terms of assembly, homodimer. Pyridoxal 5'-phosphate serves as cofactor.

The protein localises to the cytoplasm. The catalysed reaction is O-phospho-L-serine + 2-oxoglutarate = 3-phosphooxypyruvate + L-glutamate. It catalyses the reaction 4-(phosphooxy)-L-threonine + 2-oxoglutarate = (R)-3-hydroxy-2-oxo-4-phosphooxybutanoate + L-glutamate. The protein operates within amino-acid biosynthesis; L-serine biosynthesis; L-serine from 3-phospho-D-glycerate: step 2/3. It functions in the pathway cofactor biosynthesis; pyridoxine 5'-phosphate biosynthesis; pyridoxine 5'-phosphate from D-erythrose 4-phosphate: step 3/5. Its function is as follows. Catalyzes the reversible conversion of 3-phosphohydroxypyruvate to phosphoserine and of 3-hydroxy-2-oxo-4-phosphonooxybutanoate to phosphohydroxythreonine. The protein is Phosphoserine aminotransferase of Desulfatibacillum aliphaticivorans.